A 476-amino-acid polypeptide reads, in one-letter code: Oogenesin-2 (476 aa).

One copy of the LRR 1; degenerate repeat lies at 97 to 121 (RCKLREITLSHDLVVVWAGSHEVEG). One copy of the LRR 2; degenerate repeat lies at 176–200 (HLHCRKLKIYGLTKAAVIEMFKIVH). The LRR 3; degenerate repeat unit spans residues 201–226 (AEYIEDLELSCLCLEYLDFLNPYLKQ). An LRR 4; degenerate repeat occupies 227 to 264 (MSNLLSLTLDEIIYTLNIDDYRNLNEEKVITVISHLPT). LRR repeat units follow at residues 265 to 285 (FHHL…LRCL), 286 to 317 (KKPL…FELR), 342 to 369 (RHTL…ALSQ), and 370 to 394 (CYQL…LLHH).

This sequence belongs to the PRAME family. Expressed in ovary, specifically in oocytes. Detected in follicles with two layers of granulosa cells, and are present in early as well as large antral follicles.

The protein is Oogenesin-2 of Mus musculus (Mouse).